Here is a 444-residue protein sequence, read N- to C-terminus: Signal recognition particle 54 kDa protein (444 aa).

Residues 106–113 (GLQGSGKT), 187–191 (DTAGR), and 245–248 (SKLD) contribute to the GTP site.

This sequence belongs to the GTP-binding SRP family. SRP54 subfamily. As to quaternary structure, part of the signal recognition particle protein translocation system, which is composed of SRP and FtsY. Archaeal SRP consists of a 7S RNA molecule of 300 nucleotides and two protein subunits: SRP54 and SRP19.

It is found in the cytoplasm. The catalysed reaction is GTP + H2O = GDP + phosphate + H(+). Involved in targeting and insertion of nascent membrane proteins into the cytoplasmic membrane. Binds to the hydrophobic signal sequence of the ribosome-nascent chain (RNC) as it emerges from the ribosomes. The SRP-RNC complex is then targeted to the cytoplasmic membrane where it interacts with the SRP receptor FtsY. In Methanosphaera stadtmanae (strain ATCC 43021 / DSM 3091 / JCM 11832 / MCB-3), this protein is Signal recognition particle 54 kDa protein.